The following is a 320-amino-acid chain: Glutathione synthetase (320 aa).

The region spanning 130–315 is the ATP-grasp domain; it reads KIFISWFSRF…ITGILIDYIE (186 aa). 156 to 212 lines the ATP pocket; it reads WKEKNDIILKPLDAMGGKGVFRIKKDDPNFSVIVETLTNYEKKYCMIQTYLPEVQFG. Residues glutamate 286 and asparagine 288 each coordinate Mg(2+).

The protein belongs to the prokaryotic GSH synthase family. Requires Mg(2+) as cofactor. Mn(2+) serves as cofactor.

The catalysed reaction is gamma-L-glutamyl-L-cysteine + glycine + ATP = glutathione + ADP + phosphate + H(+). It functions in the pathway sulfur metabolism; glutathione biosynthesis; glutathione from L-cysteine and L-glutamate: step 2/2. The chain is Glutathione synthetase from Buchnera aphidicola subsp. Schizaphis graminum (strain Sg).